The chain runs to 537 residues: Lysine--tRNA ligase (537 aa).

The short motif at 30–38 is the 'HIGH' region element; that stretch reads PSGNIHIGN. A 'KMSKS' region motif is present at residues 276–280; sequence AMSSS.

It belongs to the class-I aminoacyl-tRNA synthetase family.

Its subcellular location is the cytoplasm. The catalysed reaction is tRNA(Lys) + L-lysine + ATP = L-lysyl-tRNA(Lys) + AMP + diphosphate. The polypeptide is Lysine--tRNA ligase (Methanosarcina barkeri).